A 338-amino-acid chain; its full sequence is Protein RecA (338 aa).

68–75 provides a ligand contact to ATP; it reads GPESSGKT.

Belongs to the RecA family.

The protein localises to the cytoplasm. In terms of biological role, can catalyze the hydrolysis of ATP in the presence of single-stranded DNA, the ATP-dependent uptake of single-stranded DNA by duplex DNA, and the ATP-dependent hybridization of homologous single-stranded DNAs. It interacts with LexA causing its activation and leading to its autocatalytic cleavage. This is Protein RecA from Citrifermentans bemidjiense (strain ATCC BAA-1014 / DSM 16622 / JCM 12645 / Bem) (Geobacter bemidjiensis).